The sequence spans 444 residues: Ribosomal protein uS12 methylthiotransferase RimO (444 aa).

Residues 4-120 enclose the MTTase N-terminal domain; sequence KSAALVSLGC…LKSFIRDHEA (117 aa). [4Fe-4S] cluster contacts are provided by cysteine 13, cysteine 49, cysteine 83, cysteine 157, cysteine 161, and cysteine 164. Positions 143 to 371 constitute a Radical SAM core domain; sequence VEGRSSAYVK…LELQRGISRR (229 aa). Residues 374 to 442 enclose the TRAM domain; sequence ESLVGRVLPV…DYDVEAELLS (69 aa).

It belongs to the methylthiotransferase family. RimO subfamily. It depends on [4Fe-4S] cluster as a cofactor.

It is found in the cytoplasm. The catalysed reaction is L-aspartate(89)-[ribosomal protein uS12]-hydrogen + (sulfur carrier)-SH + AH2 + 2 S-adenosyl-L-methionine = 3-methylsulfanyl-L-aspartate(89)-[ribosomal protein uS12]-hydrogen + (sulfur carrier)-H + 5'-deoxyadenosine + L-methionine + A + S-adenosyl-L-homocysteine + 2 H(+). Functionally, catalyzes the methylthiolation of an aspartic acid residue of ribosomal protein uS12. The polypeptide is Ribosomal protein uS12 methylthiotransferase RimO (Syntrophobacter fumaroxidans (strain DSM 10017 / MPOB)).